A 309-amino-acid chain; its full sequence is Metal ABC transporter substrate-binding lipoprotein FimA (309 aa).

The N-terminal stretch at 1–20 (MKKIASVLALFVALLFGLLA) is a signal peptide. Cys21 carries N-palmitoyl cysteine lipidation. The S-diacylglycerol cysteine moiety is linked to residue Cys21. 4 residues coordinate a divalent metal cation: His67, His139, Glu205, and Asp280.

It belongs to the bacterial solute-binding protein 9 family. Lipoprotein receptor antigen (Lrai) subfamily.

The protein localises to the cell membrane. Functionally, part of an ATP-binding cassette (ABC) transport system involved in metal import. Binds a metal with high affinity and specificity and delivers it to the membrane permease for translocation into the cytoplasm. Also acts as an adhesin which is involved on adherence to extracellular matrix. It is an important factor in pathogenesis and infection. May contribute to the formation and accumulation of dental plaque. The polypeptide is Metal ABC transporter substrate-binding lipoprotein FimA (fimA) (Streptococcus parasanguinis).